The following is an 897-amino-acid chain: Molybdenum import ATP-binding protein ModC 2 (897 aa).

The region spanning 6–236 (RGRIDAAFRG…PALPLAYSRD (231 aa)) is the ABC transporter domain. Position 38 to 45 (38 to 45 (GPSGCGKT)) interacts with ATP. Residues 295-365 (ESSILNILPA…VKGVSLVRAS (71 aa)) form the Mop domain. Residues 823 to 848 (LGDRSVLGPREPDAGAKGRKRQNDPE) are disordered. The segment covering 832-848 (REPDAGAKGRKRQNDPE) has biased composition (basic and acidic residues).

It belongs to the ABC transporter superfamily. Molybdate importer (TC 3.A.1.8) family. In terms of assembly, the complex is composed of two ATP-binding proteins (ModC), two transmembrane proteins (ModB) and a solute-binding protein (ModA).

The protein resides in the cell inner membrane. It catalyses the reaction molybdate(out) + ATP + H2O = molybdate(in) + ADP + phosphate + H(+). Part of the ABC transporter complex ModABC involved in molybdenum import. Responsible for energy coupling to the transport system. In Bradyrhizobium diazoefficiens (strain JCM 10833 / BCRC 13528 / IAM 13628 / NBRC 14792 / USDA 110), this protein is Molybdenum import ATP-binding protein ModC 2.